The primary structure comprises 189 residues: Large ribosomal subunit protein bL17 (189 aa).

The protein belongs to the bacterial ribosomal protein bL17 family. In terms of assembly, part of the 50S ribosomal subunit. Contacts protein L32.

This Rhodococcus jostii (strain RHA1) protein is Large ribosomal subunit protein bL17.